The following is a 251-amino-acid chain: Developmental protein SEPALLATA 3 (251 aa).

The MADS-box domain occupies 3–57 (RGRVELKRIENKINRQVTFAKRRNGLLKKAYELSVLCDAEVALIIFSNRGKLYEF). The region spanning 91–181 (ELSSQQEYLK…RLRLADGYQM (91 aa)) is the K-box domain. Positions 94–177 (SQQEYLKLKE…NKTLRLRLAD (84 aa)) form a coiled coil.

In terms of assembly, forms homodimers. Heterodimer with AP1 or AG capable of binding to CArG-box sequences. Binds AP3/PI to form a ternary complex. Interacts with AGL16. Interacts with TT16/AGL32.

The protein resides in the nucleus. Probable transcription factor active in inflorescence development and floral organogenesis. Functions with SEPALLATA1/AGL2 and SEPALLATA2/AGL4 to ensure proper development of petals, stamens and carpels and to prevent the indeterminate growth of the flower meristem. Interacts with APETALA1, AGAMOUS or APETALA3/PISTILLATA to form complexes, that could be involved in genes regulation during floral meristem development. Binds specifically to the CArG box DNA sequence 5'-CC (A/T)6 GG-3'. In Arabidopsis thaliana (Mouse-ear cress), this protein is Developmental protein SEPALLATA 3 (SEP3).